We begin with the raw amino-acid sequence, 174 residues long: Chorion protein S18 (174 aa).

A signal peptide spans 1–17 (MMKFMCIFICAVAAVSA). A compositionally biased stretch (low complexity) spans 154 to 165 (AAAASSSVAGVA). The segment at 154–174 (AAAASSSVAGVAKKGYRKSSY) is disordered.

Belongs to the chorion protein S15/S18 family.

Its subcellular location is the secreted. Its function is as follows. Chorion membrane (egg shell) protein; plays a role in protecting the egg from the environment. This Drosophila subobscura (Fruit fly) protein is Chorion protein S18 (Cp18).